Consider the following 314-residue polypeptide: Nodulation protein D 1 (314 aa).

The HTH lysR-type domain maps to 6–63 (LDLNLLVALDALMTERNLTAAARKIHLSQPAMSAAVARLRTYFGDELFTMRGRELVPT). A DNA-binding region (H-T-H motif) is located at residues 23 to 42 (LTAAARKIHLSQPAMSAAVA).

It belongs to the LysR transcriptional regulatory family.

In terms of biological role, nodD regulates the expression of the nodABCFE genes which encode other nodulation proteins. NodD is also a negative regulator of its own expression. Binds flavonoids as inducers. The chain is Nodulation protein D 1 (nodD1) from Bradyrhizobium sp. (strain NC92).